A 712-amino-acid polypeptide reads, in one-letter code: MRPVSQIERTVAPFEVVSPYQPSGDQPTAIAELARRVQAGEKDVVLLGATGTGKSATTAWMIEKLQRPTLVMAPNKTLAAQLANEFRELLPNNAVEYFVSYYDYYQPEAYVPQSDTYIEKDSSINEEVERLRHSATNSLLTRRDVIVVASVSCIYGLGTPQEYVDRMVPLRVGEEHDRDELLRRFVDIQYTRNDMAFARGTFRVRGDTIEIFPVYEELAVRIEMFGDEIEALSTLHPVTGEIISEDQQLYVFPASHYVAGPERLERAVNDIEKELAERLTELEKQGKLLEAQRLRMRTTYDIEMLRQIGSCSGVENYSMHFDGRSPGSPPNTLLDYFPDDFLLVIDESHVTVPQIGAMYEGDASRKRTLVDHGFRLPSALDNRPLKWEEFQERIGQTVYLSATPGAYELSRSDGAVEQIIRPTGLVDPEVVVKPTEGQIDDLVHEIRRRTEKDERVLVTTLTKKMAEDLTDYFVELGIQVRYLHSDVDTLRRVELLRELRAGEYDVLVGINLLREGLDLPEVSLVAILDADKEGFLRSGTSLIQTIGRAARNVSGQVHMYADKITPAMEKAIDETNRRREKQVAFNKANGVDPQPLRKKINDIVAQIAREDVDTEQLLGSGYRQTKEGKGAKAPVPALGGQKTGGAKAARGRAKETAVTDRPAAELAEQIEDLTTRMRAAAADLQFEIAARLRDEVSEMKKELRQMREAGLA.

A Helicase ATP-binding domain is found at 35-421 (RRVQAGEKDV…SDGAVEQIIR (387 aa)). 48–55 (GATGTGKS) contacts ATP. A Beta-hairpin motif is present at residues 101–124 (YYDYYQPEAYVPQSDTYIEKDSSI). The Helicase C-terminal domain occupies 438–604 (QIDDLVHEIR…PLRKKINDIV (167 aa)). The tract at residues 625–655 (TKEGKGAKAPVPALGGQKTGGAKAARGRAKE) is disordered. Residues 667 to 702 (AEQIEDLTTRMRAAAADLQFEIAARLRDEVSEMKKE) form the UVR domain.

This sequence belongs to the UvrB family. In terms of assembly, forms a heterotetramer with UvrA during the search for lesions. Interacts with UvrC in an incision complex.

It localises to the cytoplasm. The UvrABC repair system catalyzes the recognition and processing of DNA lesions. A damage recognition complex composed of 2 UvrA and 2 UvrB subunits scans DNA for abnormalities. Upon binding of the UvrA(2)B(2) complex to a putative damaged site, the DNA wraps around one UvrB monomer. DNA wrap is dependent on ATP binding by UvrB and probably causes local melting of the DNA helix, facilitating insertion of UvrB beta-hairpin between the DNA strands. Then UvrB probes one DNA strand for the presence of a lesion. If a lesion is found the UvrA subunits dissociate and the UvrB-DNA preincision complex is formed. This complex is subsequently bound by UvrC and the second UvrB is released. If no lesion is found, the DNA wraps around the other UvrB subunit that will check the other stand for damage. In Streptomyces coelicolor (strain ATCC BAA-471 / A3(2) / M145), this protein is UvrABC system protein B.